A 205-amino-acid polypeptide reads, in one-letter code: Glycerol-3-phosphate acyltransferase (205 aa).

A run of 5 helical transmembrane segments spans residues 4–24 (IAPGLVLLAYLCGSISSAILV), 80–100 (PFWLGLVAIAACVGHIWPVFF), 107–127 (GVATAFGAIAPIGLDLTGVMA), 130–150 (WLLTILLSGYSSLGAIVSALI), and 155–175 (VWWFKPQYTFPVSMLSCLILL).

The protein belongs to the PlsY family. As to quaternary structure, probably interacts with PlsX.

The protein resides in the cell inner membrane. The enzyme catalyses an acyl phosphate + sn-glycerol 3-phosphate = a 1-acyl-sn-glycero-3-phosphate + phosphate. It functions in the pathway lipid metabolism; phospholipid metabolism. In terms of biological role, catalyzes the transfer of an acyl group from acyl-phosphate (acyl-PO(4)) to glycerol-3-phosphate (G3P) to form lysophosphatidic acid (LPA). This enzyme utilizes acyl-phosphate as fatty acyl donor, but not acyl-CoA or acyl-ACP. The sequence is that of Glycerol-3-phosphate acyltransferase from Klebsiella pneumoniae (strain 342).